We begin with the raw amino-acid sequence, 269 residues long: Interleukin-1 beta (269 aa).

Residues 1-112 (MAMVPEITCD…EEPITFKNCD (112 aa)) constitute a propeptide that is removed on maturation.

It belongs to the IL-1 family. As to quaternary structure, monomer. In its precursor form, weakly interacts with full-length MEFV; the mature cytokine does not interact at all. Interacts with integrins ITGAV:ITGBV and ITGA5:ITGB1; integrin-binding is required for IL1B signaling. Interacts with cargo receptor TMED10; the interaction is direct and is required for the secretion of IL1B mature form. Interacts with HSP90AB1; the interaction facilitates cargo translocation into the ERGIC. Interacts with HSP90B1; the interaction facilitates cargo translocation into the ERGIC.

The protein resides in the cytoplasm. It localises to the cytosol. The protein localises to the secreted. Its subcellular location is the lysosome. It is found in the extracellular exosome. In terms of biological role, potent pro-inflammatory cytokine. Initially discovered as the major endogenous pyrogen, induces prostaglandin synthesis, neutrophil influx and activation, T-cell activation and cytokine production, B-cell activation and antibody production, and fibroblast proliferation and collagen production. Promotes Th17 differentiation of T-cells. Synergizes with IL12/interleukin-12 to induce IFNG synthesis from T-helper 1 (Th1) cells. Plays a role in angiogenesis by inducing VEGF production synergistically with TNF and IL6. Involved in transduction of inflammation downstream of pyroptosis: its mature form is specifically released in the extracellular milieu by passing through the gasdermin-D (GSDMD) pore. The polypeptide is Interleukin-1 beta (IL1B) (Trichosurus vulpecula (Brush-tailed possum)).